A 209-amino-acid chain; its full sequence is MARYKESACRLCRREGLKLFLKGDRCYGEKCAFERRGYAPGEHGQLRRKQPSDYGVQLREKQKLKRMYGLLEKQFRGYFEKADKKKGITGTNLLLYLERRLDNMVYRLGFANSRNEARQLVRHNHFLVNGRKVNIPSFLVNIGDFIEVTEEGRKNNKIIEAMETIVRRGIPQWLELEQENFKGKVKMLPTREELTMPIQEQLVVELYSK.

The 64-residue stretch at 99–162 folds into the S4 RNA-binding domain; that stretch reads RRLDNMVYRL…RKNNKIIEAM (64 aa).

Belongs to the universal ribosomal protein uS4 family. As to quaternary structure, part of the 30S ribosomal subunit. Contacts protein S5. The interaction surface between S4 and S5 is involved in control of translational fidelity.

One of the primary rRNA binding proteins, it binds directly to 16S rRNA where it nucleates assembly of the body of the 30S subunit. In terms of biological role, with S5 and S12 plays an important role in translational accuracy. The protein is Small ribosomal subunit protein uS4 of Syntrophus aciditrophicus (strain SB).